Here is a 442-residue protein sequence, read N- to C-terminus: MRAIGVIRNSRRERLSRAEFEELLRSAGYEVLAIVEQNREEHPRYNIGPGKLEELKELVKELKPDKVIFANRLTPSQAYNLWKELRIEIMDRWQLVLEIFEKRAHSKEAKLQVELASLQYEIPLVKEAIRRIRLGDRAGFKGMGEYQTQQYLKHIRYRMGKIRDELERVKADREVKRKKRENAGFVLVALAGYTNAGKSTLLNALADENVEAKNQMFTTLDTTTRRFRLGTKRILATDTVGFIDGLPPFIVEAFHSTLEEIVKADIVLLVLDSSEPWGEIRRKFLASLQVLRELKALEKPIIVALNKIDLIEEADAEEKVRLIWELARERGISLEDVVKISAREGRLEELMDALNRVVLKLPKYGAFRIIVKEPEKVPAVMALINSVGEVLSVEYGEKTRIDAYVQTGMVGEIKKMGAEIERLNHSGEGEELEQDEGYSDGG.

Residues 186 to 362 (VLVALAGYTN…ALNRVVLKLP (177 aa)) form the Hflx-type G domain. GTP contacts are provided by residues 192 to 199 (GYTNAGKS), 217 to 221 (FTTLD), 238 to 241 (DTVG), 306 to 309 (NKID), and 341 to 343 (SAR). Mg(2+)-binding residues include serine 199 and threonine 219.

Belongs to the TRAFAC class OBG-HflX-like GTPase superfamily. HflX GTPase family. In terms of assembly, monomer. Associates with the 50S ribosomal subunit. The cofactor is Mg(2+).

The protein localises to the cytoplasm. GTPase that associates with the 50S ribosomal subunit and may have a role during protein synthesis or ribosome biogenesis. This is GTPase HflX from Thermococcus kodakarensis (strain ATCC BAA-918 / JCM 12380 / KOD1) (Pyrococcus kodakaraensis (strain KOD1)).